A 468-amino-acid chain; its full sequence is 3-isopropylmalate dehydratase large subunit (468 aa).

Residues 53–74 (QPSKTVATMDHNVPTDSRDLAG) are disordered. Residues C347, C407, and C410 each contribute to the [4Fe-4S] cluster site.

It belongs to the aconitase/IPM isomerase family. LeuC type 1 subfamily. As to quaternary structure, heterodimer of LeuC and LeuD. [4Fe-4S] cluster is required as a cofactor.

The catalysed reaction is (2R,3S)-3-isopropylmalate = (2S)-2-isopropylmalate. It functions in the pathway amino-acid biosynthesis; L-leucine biosynthesis; L-leucine from 3-methyl-2-oxobutanoate: step 2/4. Catalyzes the isomerization between 2-isopropylmalate and 3-isopropylmalate, via the formation of 2-isopropylmaleate. The sequence is that of 3-isopropylmalate dehydratase large subunit from Pasteurella multocida (strain Pm70).